The following is a 251-amino-acid chain: BRI3-binding protein (251 aa).

A run of 4 helical transmembrane segments spans residues 13 to 33, 125 to 145, 146 to 166, and 185 to 205; these read AGLL…PGAQ, ALLL…TLGF, TFSV…VVLF, and VLPL…GFYW. A coiled-coil region spans residues 217–247; it reads NPSVEEKLEHLEKQVRLLNIRLNRVLESLDR. N6-acetyllysine is present on Lys-229. Position 248 is a phosphoserine (Ser-248).

Interacts with LETMD1. Interacts with BRI3 (isoforms 1 and 2); the interaction with isoform 2 is weaker than with isoform 1. Interacts with BRI3; the interaction is weak. Interacts with TMEM238L. As to expression, most abundantly expressed in brain, liver and kidney. Overexpressed in leukemia and lymphoma cell lines, as well as in various carcinomas.

It localises to the mitochondrion outer membrane. Involved in tumorigenesis and may function by stabilizing p53/TP53. The polypeptide is BRI3-binding protein (Homo sapiens (Human)).